We begin with the raw amino-acid sequence, 369 residues long: Putative agmatine deiminase 2 (369 aa).

Cys356 serves as the catalytic Amidino-cysteine intermediate.

It belongs to the agmatine deiminase family.

It carries out the reaction agmatine + H2O = N-carbamoylputrescine + NH4(+). The chain is Putative agmatine deiminase 2 from Listeria monocytogenes serovar 1/2a (strain ATCC BAA-679 / EGD-e).